Reading from the N-terminus, the 404-residue chain is Deoxyguanosinetriphosphate triphosphohydrolase-like protein (404 aa).

The interval 1–32 (MAVGMAAPHATYASDPARSRGRLFDEPPSKTR) is disordered. A compositionally biased stretch (basic and acidic residues) spans 22-32 (RLFDEPPSKTR). One can recognise an HD domain in the interval 69-217 (RLTHTLEVAQ…AAIADDIAYD (149 aa)).

It belongs to the dGTPase family. Type 2 subfamily.

This Nitrobacter hamburgensis (strain DSM 10229 / NCIMB 13809 / X14) protein is Deoxyguanosinetriphosphate triphosphohydrolase-like protein.